Consider the following 351-residue polypeptide: Snurportin-1 (351 aa).

2 disordered regions span residues 1–66 and 294–322; these read MESS…QKGI and EQKK…EYDS. Residues 8–42 are compositionally biased toward basic and acidic residues; the sequence is LYKKGLDIGEQQKQRQKELLKQQKLRRQQEQDDYR. A compositionally biased stretch (basic residues) spans 52 to 62; it reads PRKKSGKRSGH. The stretch at 274 to 330 forms a coiled coil; it reads VLQYMDAFEQKLAEHRRTLKEQKKKVNEQKEDPHTMEAEEDVESDEYDSLKRVLDQQ. Positions 294–310 are enriched in basic and acidic residues; the sequence is EQKKKVNEQKEDPHTME. Positions 311-320 are enriched in acidic residues; it reads AEEDVESDEY.

It belongs to the snurportin family. Interacts with components of the snRNP complex including SmB and Smn; these interactions are RNA-dependent. Interacts with importin-7 msk but not with importin subunit beta Fs(2)Ket; the interaction is RNA-dependent.

Its subcellular location is the nucleus. The protein resides in the cytoplasm. It localises to the U-body. It is found in the nucleus speckle. The protein localises to the cajal body. Its function is as follows. Functions as an U snRNP-specific nuclear import adapter. Involved in the trimethylguanosine (m3G)-cap-dependent nuclear import of U snRNPs. Binds specifically to the terminal m3G-cap U snRNAs. The chain is Snurportin-1 from Drosophila melanogaster (Fruit fly).